The chain runs to 465 residues: Argininosuccinate lyase (465 aa).

The protein belongs to the lyase 1 family. Argininosuccinate lyase subfamily.

The protein resides in the cytoplasm. It carries out the reaction 2-(N(omega)-L-arginino)succinate = fumarate + L-arginine. Its pathway is amino-acid biosynthesis; L-arginine biosynthesis; L-arginine from L-ornithine and carbamoyl phosphate: step 3/3. This is Argininosuccinate lyase from Desulfatibacillum aliphaticivorans.